Consider the following 345-residue polypeptide: MTNKLTFTRPDDWHLHLRDGKAMQSVLPDTARRFARAMIMPNLKLPVVTTEQAAAYRARILSALPQELVGQFEPLMTLYLTDTTTPEEISRAKASGIVQAVKLYPAGATTHSDAGVTDIDRCKATLAMMEKLDMPLLVHGEVVDPAVDIFDREKIFIDRVLIPLLQRFPGLRVVFEHITTREAVEFVQSISNRIAATITAHHLMLNRNALFTGGLQPHHYCLPVLKREIHRQALVAAATSGHSRFFLGTDSAPHPLKDKESACGCAGIYSAHAAIEFYAEIFEQAGRLDRLEAFASFYGPDFYGLPRNTDQISLSKESWQIPGEVEFGGDRLVPLRAGEQVCWRL.

Histidine 14 and histidine 16 together coordinate Zn(2+). Substrate is bound by residues 16-18 (HLR) and asparagine 42. The Zn(2+) site is built by lysine 102, histidine 139, and histidine 177. An N6-carboxylysine modification is found at lysine 102. Residue histidine 139 participates in substrate binding. Residue leucine 222 coordinates substrate. Aspartate 250 is a binding site for Zn(2+). Residue aspartate 250 is part of the active site. Residues histidine 254 and alanine 266 each contribute to the substrate site.

It belongs to the metallo-dependent hydrolases superfamily. DHOase family. Class II DHOase subfamily. In terms of assembly, homodimer. The cofactor is Zn(2+).

It carries out the reaction (S)-dihydroorotate + H2O = N-carbamoyl-L-aspartate + H(+). It participates in pyrimidine metabolism; UMP biosynthesis via de novo pathway; (S)-dihydroorotate from bicarbonate: step 3/3. In terms of biological role, catalyzes the reversible cyclization of carbamoyl aspartate to dihydroorotate. The chain is Dihydroorotase from Nitrosomonas eutropha (strain DSM 101675 / C91 / Nm57).